The sequence spans 335 residues: Nucleoid-associated protein YejK (335 aa).

The protein belongs to the YejK family.

The protein localises to the cytoplasm. Its subcellular location is the nucleoid. In Shigella sonnei (strain Ss046), this protein is Nucleoid-associated protein YejK.